Here is a 145-residue protein sequence, read N- to C-terminus: Large ribosomal subunit protein uL13 (145 aa).

Belongs to the universal ribosomal protein uL13 family. As to quaternary structure, part of the 50S ribosomal subunit.

In terms of biological role, this protein is one of the early assembly proteins of the 50S ribosomal subunit, although it is not seen to bind rRNA by itself. It is important during the early stages of 50S assembly. This Geobacillus sp. (strain WCH70) protein is Large ribosomal subunit protein uL13.